A 134-amino-acid chain; its full sequence is Transcription antitermination protein NusB (134 aa).

Belongs to the NusB family.

Involved in transcription antitermination. Required for transcription of ribosomal RNA (rRNA) genes. Binds specifically to the boxA antiterminator sequence of the ribosomal RNA (rrn) operons. The polypeptide is Transcription antitermination protein NusB (Shewanella amazonensis (strain ATCC BAA-1098 / SB2B)).